The sequence spans 261 residues: MPRFALLIEYDGSPFAGWQAQAERPSVQSTIEAALGRLDPGFAAGARIAAAGRTDAGVHATGQVAHADLARDWDPFRLSEALNWHLKPAPVAILAAARVADDFHARFSAHERRYLFRLVARRAPLTHDRGRAWQVPHRLDLAAMRAGAAHLLGRHDFTTFRSTMCQANSPVKTLDELTIDEAEIPQGREYRFFLRARSFLHNQVRSIVGTLERVGAGAWPPGRVAEALAACDRAACGPVCPPQGLYLTGVGYETPPFSDSR.

Aspartate 55 functions as the Nucleophile in the catalytic mechanism. Residue tyrosine 114 coordinates substrate.

It belongs to the tRNA pseudouridine synthase TruA family. In terms of assembly, homodimer.

The catalysed reaction is uridine(38/39/40) in tRNA = pseudouridine(38/39/40) in tRNA. In terms of biological role, formation of pseudouridine at positions 38, 39 and 40 in the anticodon stem and loop of transfer RNAs. This Paracoccus denitrificans (strain Pd 1222) protein is tRNA pseudouridine synthase A.